Here is a 445-residue protein sequence, read N- to C-terminus: ATP-dependent protease ATPase subunit HslU (445 aa).

Residues Ile-18, 60–65 (GVGKTE), Asp-258, Glu-323, and Arg-395 contribute to the ATP site.

The protein belongs to the ClpX chaperone family. HslU subfamily. A double ring-shaped homohexamer of HslV is capped on each side by a ring-shaped HslU homohexamer. The assembly of the HslU/HslV complex is dependent on binding of ATP.

The protein resides in the cytoplasm. ATPase subunit of a proteasome-like degradation complex; this subunit has chaperone activity. The binding of ATP and its subsequent hydrolysis by HslU are essential for unfolding of protein substrates subsequently hydrolyzed by HslV. HslU recognizes the N-terminal part of its protein substrates and unfolds these before they are guided to HslV for hydrolysis. In Syntrophotalea carbinolica (strain DSM 2380 / NBRC 103641 / GraBd1) (Pelobacter carbinolicus), this protein is ATP-dependent protease ATPase subunit HslU.